Here is a 174-residue protein sequence, read N- to C-terminus: Gamma-crystallin C (174 aa).

2 Beta/gamma crystallin 'Greek key' domains span residues 2–40 (GKIT…RVDS) and 41–83 (GCWM…RLIP). At Cys-23 the chain carries S-methylcysteine. The tract at residues 84–87 (HTGS) is connecting peptide. Beta/gamma crystallin 'Greek key' domains follow at residues 88–128 (HRMR…HVLE) and 129–171 (GCWV…RRVV).

Belongs to the beta/gamma-crystallin family.

In terms of biological role, crystallins are the dominant structural components of the vertebrate eye lens. The sequence is that of Gamma-crystallin C (Crygc) from Rattus norvegicus (Rat).